Here is a 123-residue protein sequence, read N- to C-terminus: Small ribosomal subunit protein uS13 (123 aa).

The tract at residues 97–123 (PVRGQRTHTNAKTRKGRSRLPVAAKKK) is disordered.

The protein belongs to the universal ribosomal protein uS13 family. As to quaternary structure, part of the 30S ribosomal subunit. Forms a loose heterodimer with protein S19. Forms two bridges to the 50S subunit in the 70S ribosome.

Functionally, located at the top of the head of the 30S subunit, it contacts several helices of the 16S rRNA. In the 70S ribosome it contacts the 23S rRNA (bridge B1a) and protein L5 of the 50S subunit (bridge B1b), connecting the 2 subunits; these bridges are implicated in subunit movement. Contacts the tRNAs in the A and P-sites. The sequence is that of Small ribosomal subunit protein uS13 from Ehrlichia ruminantium (strain Gardel).